A 184-amino-acid polypeptide reads, in one-letter code: Ribosome-recycling factor (184 aa).

It belongs to the RRF family.

The protein resides in the cytoplasm. Its function is as follows. Responsible for the release of ribosomes from messenger RNA at the termination of protein biosynthesis. May increase the efficiency of translation by recycling ribosomes from one round of translation to another. This chain is Ribosome-recycling factor, found in Mycoplasma pneumoniae (strain ATCC 29342 / M129 / Subtype 1) (Mycoplasmoides pneumoniae).